The chain runs to 90 residues: MAHHKSAKKRIRQTERRTEVNRARVSRIRTYVKKVELAIAGGDSAAAQAALQEAQPELMKGAQAGILHKNTASRKVSRLVARVKEMKSLA.

The segment covering methionine 1–isoleucine 11 has biased composition (basic residues). The disordered stretch occupies residues methionine 1–arginine 22. Basic and acidic residues predominate over residues arginine 12–arginine 22.

The protein belongs to the bacterial ribosomal protein bS20 family.

Functionally, binds directly to 16S ribosomal RNA. This is Small ribosomal subunit protein bS20 from Paramagnetospirillum magneticum (strain ATCC 700264 / AMB-1) (Magnetospirillum magneticum).